The primary structure comprises 274 residues: Adenosylcobinamide-GDP ribazoletransferase (274 aa).

7 consecutive transmembrane segments (helical) span residues 46–66 (VMAS…AIAF), 69–89 (TSLG…WELF), 117–137 (IIAD…SILI), 151–173 (WWMV…HSRL), 192–212 (HTII…PLAM), 216–236 (ELIT…LVEI), and 253–273 (FIMH…VGIV).

Belongs to the CobS family. Requires Mg(2+) as cofactor.

The protein resides in the cell membrane. It carries out the reaction alpha-ribazole + adenosylcob(III)inamide-GDP = adenosylcob(III)alamin + GMP + H(+). The enzyme catalyses alpha-ribazole 5'-phosphate + adenosylcob(III)inamide-GDP = adenosylcob(III)alamin 5'-phosphate + GMP + H(+). It participates in cofactor biosynthesis; adenosylcobalamin biosynthesis; adenosylcobalamin from cob(II)yrinate a,c-diamide: step 7/7. In terms of biological role, joins adenosylcobinamide-GDP and alpha-ribazole to generate adenosylcobalamin (Ado-cobalamin). Also synthesizes adenosylcobalamin 5'-phosphate from adenosylcobinamide-GDP and alpha-ribazole 5'-phosphate. The protein is Adenosylcobinamide-GDP ribazoletransferase of Corynebacterium diphtheriae (strain ATCC 700971 / NCTC 13129 / Biotype gravis).